A 184-amino-acid chain; its full sequence is Adenine phosphoribosyltransferase (184 aa).

Belongs to the purine/pyrimidine phosphoribosyltransferase family. Homodimer.

It localises to the cytoplasm. It catalyses the reaction AMP + diphosphate = 5-phospho-alpha-D-ribose 1-diphosphate + adenine. The protein operates within purine metabolism; AMP biosynthesis via salvage pathway; AMP from adenine: step 1/1. Its function is as follows. Catalyzes a salvage reaction resulting in the formation of AMP, that is energically less costly than de novo synthesis. In Myxococcus xanthus (strain DK1622), this protein is Adenine phosphoribosyltransferase.